We begin with the raw amino-acid sequence, 187 residues long: Proline-rich protein 29 (187 aa).

Positions 133-187 are disordered; that stretch reads HQPPWQGEPRIQHQPPASRQEEVRDVPPPPPPSATGTVGADVPPASDYYDAESLP.

The sequence is that of Proline-rich protein 29 (Prr29) from Mus musculus (Mouse).